A 441-amino-acid polypeptide reads, in one-letter code: Hydroxycinnamoyl-CoA:5-hydroxyanthranilate N-hydroxycinnamoyltransferase HHT1 (441 aa).

Catalysis depends on proton acceptor residues H158 and D388.

The protein belongs to the plant acyltransferase family.

It catalyses the reaction 5-hydroxyanthranilate + (E)-4-coumaroyl-CoA = avenanthramide A + CoA. The enzyme catalyses 5-hydroxyanthranilate + (E)-caffeoyl-CoA = avenanthramide C + CoA. Functionally, involved in the biosynthesis of avenanthramide phytoalexins, which are phenolic alkaloids found mainly in oats. Catalyzes the N-acylation of 5-hydroxyanthranilate with 4-coumaroyl-CoA or caffeoyl-CoA as acyl donors, forming avenanthramide A and avenanthramide C, respectively. Does not accept feruloyl-CoA as a substrate. The chain is Hydroxycinnamoyl-CoA:5-hydroxyanthranilate N-hydroxycinnamoyltransferase HHT1 from Avena sativa (Oat).